Consider the following 289-residue polypeptide: Somatostatin-like receptor F_48D10.1 (289 aa).

Residues 1–57 (MEPLDQTPGFPLSPEPNYWYETTPSLLLVSYPHLLDISSNQSTQSVPFQGSSALLTA) lie on the Extracellular side of the membrane. Asn-40 carries an N-linked (GlcNAc...) asparagine glycan. A helical transmembrane segment spans residues 58–79 (VIYITVFVVGLTGNTLAIYVVL). The Cytoplasmic segment spans residues 80 to 89 (RYAGMKTVTN). A helical transmembrane segment spans residues 90–110 (IYILNLAVADELYIVGLPFLA). The Extracellular portion of the chain corresponds to 111 to 126 (TQNVLSYWPFGSFLCR). Cys-125 and Cys-221 are oxidised to a cystine. The chain crosses the membrane as a helical span at residues 127 to 148 (VVMTADSMNQFTSIFCLTVMSI). At 149-170 (DRYLAVVHPIRSTKWRHPRVAK) the chain is on the cytoplasmic side. The helical transmembrane segment at 171–191 (VVSAAVWAVSFVVVLPVVIFS) threads the bilayer. Over 192-240 (DVQVRPSRPLQVGTSSKCLVKRVQETFNSCNMIWPEPKNVWSTAFILYT) the chain is Extracellular. The helical transmembrane segment at 241–261 (AMVGFFGPLLIICLCYLLIVI) threads the bilayer. Residues 262–289 (KVRHRMSAAQVGAVVSTCPLNICCLSRR) lie on the Cytoplasmic side of the membrane.

It belongs to the G-protein coupled receptor 1 family.

The protein resides in the cell membrane. This chain is Somatostatin-like receptor F_48D10.1, found in Takifugu rubripes (Japanese pufferfish).